A 176-amino-acid polypeptide reads, in one-letter code: Large ribosomal subunit protein uL6 (176 aa).

Residues 151–170 (RPPEPYKGKGVRYADEQVRR) are compositionally biased toward basic and acidic residues. Residues 151–176 (RPPEPYKGKGVRYADEQVRRKEAKKK) are disordered.

This sequence belongs to the universal ribosomal protein uL6 family. In terms of assembly, part of the 50S ribosomal subunit.

In terms of biological role, this protein binds to the 23S rRNA, and is important in its secondary structure. It is located near the subunit interface in the base of the L7/L12 stalk, and near the tRNA binding site of the peptidyltransferase center. The polypeptide is Large ribosomal subunit protein uL6 (Shewanella piezotolerans (strain WP3 / JCM 13877)).